Consider the following 196-residue polypeptide: Large ribosomal subunit protein eL15 (196 aa).

The segment at 162 to 196 (RGLTNAGRSNRGLQNRGKGAEHTRPSAGSGSRRGK) is disordered.

It belongs to the eukaryotic ribosomal protein eL15 family.

The chain is Large ribosomal subunit protein eL15 from Haloquadratum walsbyi (strain DSM 16790 / HBSQ001).